The primary structure comprises 332 residues: Nicotianamine synthase 1 (332 aa).

Belongs to the nicotianamine synthase (NAS)-like family. In terms of tissue distribution, expressed in roots.

The catalysed reaction is 3 S-adenosyl-L-methionine = nicotianamine + 3 S-methyl-5'-thioadenosine + 3 H(+). Synthesizes nicotianamine, a polyamine that is the first intermediate in the synthesis of the phytosiderophores of the mugineic acid type found in gramineae which serve as a sensor for the physiological iron status within the plant, and/or might be involved in the transport of iron. The chain is Nicotianamine synthase 1 (NAS1) from Oryza sativa subsp. indica (Rice).